The chain runs to 241 residues: Methylthioribulose-1-phosphate dehydratase (241 aa).

C100 lines the substrate pocket. Zn(2+)-binding residues include H117 and H119. E146 acts as the Proton donor/acceptor in catalysis. Zn(2+) is bound at residue H202.

This sequence belongs to the aldolase class II family. MtnB subfamily. It depends on Zn(2+) as a cofactor.

The protein resides in the cytoplasm. The catalysed reaction is 5-(methylsulfanyl)-D-ribulose 1-phosphate = 5-methylsulfanyl-2,3-dioxopentyl phosphate + H2O. It functions in the pathway amino-acid biosynthesis; L-methionine biosynthesis via salvage pathway; L-methionine from S-methyl-5-thio-alpha-D-ribose 1-phosphate: step 2/6. Its function is as follows. Catalyzes the dehydration of methylthioribulose-1-phosphate (MTRu-1-P) into 2,3-diketo-5-methylthiopentyl-1-phosphate (DK-MTP-1-P). This chain is Methylthioribulose-1-phosphate dehydratase, found in Ajellomyces dermatitidis (strain ER-3 / ATCC MYA-2586) (Blastomyces dermatitidis).